The chain runs to 463 residues: ATP-dependent protease ATPase subunit HslU (463 aa).

Residues Ile-19, 61–66 (GVGKTE), Asp-277, Glu-341, and Arg-413 each bind ATP.

This sequence belongs to the ClpX chaperone family. HslU subfamily. As to quaternary structure, a double ring-shaped homohexamer of HslV is capped on each side by a ring-shaped HslU homohexamer. The assembly of the HslU/HslV complex is dependent on binding of ATP.

Its subcellular location is the cytoplasm. In terms of biological role, ATPase subunit of a proteasome-like degradation complex; this subunit has chaperone activity. The binding of ATP and its subsequent hydrolysis by HslU are essential for unfolding of protein substrates subsequently hydrolyzed by HslV. HslU recognizes the N-terminal part of its protein substrates and unfolds these before they are guided to HslV for hydrolysis. The protein is ATP-dependent protease ATPase subunit HslU of Bacillus cereus (strain ATCC 14579 / DSM 31 / CCUG 7414 / JCM 2152 / NBRC 15305 / NCIMB 9373 / NCTC 2599 / NRRL B-3711).